Here is a 233-residue protein sequence, read N- to C-terminus: MPVYALSEAICFPDPSLARADGLLAVGGDLSPERLLNAYCMGIFPWYSEGEPILWWSPNPRLILIPSRFHMSSSLKKTLRQKRFAVTLDTAFKDVMAACAAVRQDHGEGTWIVPEMEKAYRRLHQAGFAHSVEAWQDGELAGGLYGVSLGRGFFGESMFFKRSNASKAAFAVLVEFLTAHEFEFIDCQMKTPHLMSLGAEERPRSVFLDMLHQTLEFPTLRGRWSLESENGLA.

The protein belongs to the L/F-transferase family.

It localises to the cytoplasm. It carries out the reaction N-terminal L-lysyl-[protein] + L-leucyl-tRNA(Leu) = N-terminal L-leucyl-L-lysyl-[protein] + tRNA(Leu) + H(+). The catalysed reaction is N-terminal L-arginyl-[protein] + L-leucyl-tRNA(Leu) = N-terminal L-leucyl-L-arginyl-[protein] + tRNA(Leu) + H(+). It catalyses the reaction L-phenylalanyl-tRNA(Phe) + an N-terminal L-alpha-aminoacyl-[protein] = an N-terminal L-phenylalanyl-L-alpha-aminoacyl-[protein] + tRNA(Phe). Its function is as follows. Functions in the N-end rule pathway of protein degradation where it conjugates Leu, Phe and, less efficiently, Met from aminoacyl-tRNAs to the N-termini of proteins containing an N-terminal arginine or lysine. This chain is Leucyl/phenylalanyl-tRNA--protein transferase, found in Desulfatibacillum aliphaticivorans.